Here is a 78-residue protein sequence, read N- to C-terminus: Small ribosomal subunit protein bS18 (78 aa).

The protein belongs to the bacterial ribosomal protein bS18 family. As to quaternary structure, part of the 30S ribosomal subunit. Forms a tight heterodimer with protein bS6.

Functionally, binds as a heterodimer with protein bS6 to the central domain of the 16S rRNA, where it helps stabilize the platform of the 30S subunit. The protein is Small ribosomal subunit protein bS18 of Clostridium novyi (strain NT).